The primary structure comprises 92 residues: UPF0237 protein MM_0082 (92 aa).

Residues 7–81 (IITVIGSDRV…KSLGVEVKVQ (75 aa)) form the ACT domain.

It belongs to the UPF0237 family.

In Methanosarcina mazei (strain ATCC BAA-159 / DSM 3647 / Goe1 / Go1 / JCM 11833 / OCM 88) (Methanosarcina frisia), this protein is UPF0237 protein MM_0082.